A 330-amino-acid polypeptide reads, in one-letter code: Cathepsin S (330 aa).

The N-terminal stretch at 1–17 (MKQLVCVLFVCSSAVTQ) is a signal peptide. Residues 18–114 (LHKDPTLDHH…ITYKSNPNQM (97 aa)) constitute a propeptide, activation peptide. Asn104 is a glycosylation site (N-linked (GlcNAc...) asparagine). Disulfide bonds link Cys126–Cys223, Cys136–Cys179, Cys170–Cys212, and Cys271–Cys319. Cys139 is an active-site residue. Active-site residues include His277 and Asn297.

It belongs to the peptidase C1 family.

Its subcellular location is the lysosome. The protein localises to the secreted. It is found in the cytoplasmic vesicle. It localises to the phagosome. The enzyme catalyses Similar to cathepsin L, but with much less activity on Z-Phe-Arg-|-NHMec, and more activity on the Z-Val-Val-Arg-|-Xaa compound.. In terms of biological role, thiol protease. Key protease responsible for the removal of the invariant chain from MHC class II molecules and MHC class II antigen presentation. The bond-specificity of this proteinase is in part similar to the specificities of cathepsin L. This chain is Cathepsin S (CTSS), found in Saimiri boliviensis boliviensis (Bolivian squirrel monkey).